The chain runs to 132 residues: Small ribosomal subunit protein uS8 (132 aa).

The protein belongs to the universal ribosomal protein uS8 family. Part of the 30S ribosomal subunit. Contacts proteins S5 and S12.

In terms of biological role, one of the primary rRNA binding proteins, it binds directly to 16S rRNA central domain where it helps coordinate assembly of the platform of the 30S subunit. This Bacillus mycoides (strain KBAB4) (Bacillus weihenstephanensis) protein is Small ribosomal subunit protein uS8.